A 693-amino-acid polypeptide reads, in one-letter code: Glycine--tRNA ligase beta subunit (693 aa).

This sequence belongs to the class-II aminoacyl-tRNA synthetase family. As to quaternary structure, tetramer of two alpha and two beta subunits.

Its subcellular location is the cytoplasm. The enzyme catalyses tRNA(Gly) + glycine + ATP = glycyl-tRNA(Gly) + AMP + diphosphate. The sequence is that of Glycine--tRNA ligase beta subunit from Vibrio vulnificus (strain CMCP6).